Consider the following 308-residue polypeptide: Ribosomal RNA small subunit methyltransferase H (308 aa).

Residues 35 to 37 (GGH), Asp54, Phe80, Asp101, and Gln108 contribute to the S-adenosyl-L-methionine site.

It belongs to the methyltransferase superfamily. RsmH family.

The protein resides in the cytoplasm. It carries out the reaction cytidine(1402) in 16S rRNA + S-adenosyl-L-methionine = N(4)-methylcytidine(1402) in 16S rRNA + S-adenosyl-L-homocysteine + H(+). Specifically methylates the N4 position of cytidine in position 1402 (C1402) of 16S rRNA. This chain is Ribosomal RNA small subunit methyltransferase H, found in Mycoplasma pneumoniae (strain ATCC 29342 / M129 / Subtype 1) (Mycoplasmoides pneumoniae).